The primary structure comprises 472 residues: Nuclear hormone receptor family member nhr-2 (472 aa).

4 stretches are compositionally biased toward polar residues: residues 57–83 (TATN…LSQI), 90–112 (NDTI…HNQP), 138–147 (LSSTQSSPDN), and 159–171 (VRRN…SAST). 2 disordered regions span residues 57 to 112 (TATN…HNQP) and 138 to 184 (LSST…RTNT). The segment at residues 215–297 (KDRCMVCGDN…VGMNRDNVRV (83 aa)) is a DNA-binding region (nuclear receptor). NR C4-type zinc fingers lie at residues 218 to 238 (CMVC…CEGC) and 267 to 285 (CAAN…FAKC).

The protein belongs to the nuclear hormone receptor family.

It localises to the nucleus. In terms of biological role, orphan nuclear receptor. This is Nuclear hormone receptor family member nhr-2 (nhr-2) from Caenorhabditis elegans.